The following is a 235-amino-acid chain: Casparian strip membrane protein 2 (235 aa).

The Cytoplasmic portion of the chain corresponds to 1-70 (MTSESATVIQ…RSGAEGFRRC (70 aa)). Residues 71-91 (LAVIDFLLRVAAFGPTLAAAI) form a helical membrane-spanning segment. Over 92–118 (STGTADERLSVFTNFFQFHARFDDFPA) the chain is Extracellular. Residues 119 to 139 (FTFFLVANAVAAGYLVLSLPF) traverse the membrane as a helical segment. The Cytoplasmic portion of the chain corresponds to 140–162 (SVVVILRPNKATGGVRLLLLLCD). Residues 163 to 183 (VLIMALLTAAGAAAAAIVYVA) form a helical membrane-spanning segment. The Extracellular segment spans residues 184–210 (HSGNRRANWVPICMQFHGFCQRTSGSV). A helical transmembrane segment spans residues 211-231 (VATFLAVLVFIVLILMAACVI). Residues 232–235 (RRSK) are Cytoplasmic-facing.

This sequence belongs to the Casparian strip membrane proteins (CASP) family. Homodimer and heterodimers.

It localises to the cell membrane. In terms of biological role, regulates membrane-cell wall junctions and localized cell wall deposition. Required for establishment of the Casparian strip membrane domain (CSD) and the subsequent formation of Casparian strips, a cell wall modification of the root endodermis that determines an apoplastic barrier between the intraorganismal apoplasm and the extraorganismal apoplasm and prevents lateral diffusion. The sequence is that of Casparian strip membrane protein 2 from Sorghum bicolor (Sorghum).